The sequence spans 955 residues: Eukaryotic translation initiation factor 3 subunit C (955 aa).

2 disordered regions span residues 1–22 and 157–299; these read MSRFFAGGSDSDSDSSSDSEPV and RAAP…EEGW. Acidic residues predominate over residues 162–183; sequence DFAEEEEDDEREDEKGSDEEEE. Residues 206-218 are compositionally biased toward low complexity; sequence VKPVADSDSSDWG. Residues 219-229 are compositionally biased toward acidic residues; the sequence is SDSDSDSTSSD. Residues 230–250 are compositionally biased toward basic and acidic residues; the sequence is EDAKYTSIRDRFLKKPEKGTE. A compositionally biased stretch (acidic residues) spans 288 to 297; sequence MFDENEEEEE. A PCI domain is found at 658–834; it reads FHMHINLELL…ETIVMHRSEP (177 aa). The tract at residues 865–955 is disordered; the sequence is NFFQRGGNQG…RNVEYQNKAE (91 aa). Residues 882–894 are compositionally biased toward low complexity; it reads YRNQNQNQNWNNN. Positions 911 to 955 are enriched in basic and acidic residues; that stretch reads GEGREQREHHRDHHRDQREHREHQNREFREQREQMRNVEYQNKAE.

Belongs to the eIF-3 subunit C family. In terms of assembly, component of the eukaryotic translation initiation factor 3 (eIF-3) complex.

The protein resides in the cytoplasm. Functionally, component of the eukaryotic translation initiation factor 3 (eIF-3) complex, which is involved in protein synthesis of a specialized repertoire of mRNAs and, together with other initiation factors, stimulates binding of mRNA and methionyl-tRNAi to the 40S ribosome. The eIF-3 complex specifically targets and initiates translation of a subset of mRNAs involved in cell proliferation. The protein is Eukaryotic translation initiation factor 3 subunit C of Anopheles gambiae (African malaria mosquito).